The chain runs to 394 residues: Phosphatidylinositol 4-phosphate 5-kinase-like protein 1 (394 aa).

Residues 36-393 (DKQSRLGLFE…RLCQWVEAHT (358 aa)) form the PIPK domain.

Heterodimerizes with other type I phosphatidylinositol 4-phosphate 5-kinase.

It is found in the cytoplasm. The protein resides in the membrane. The enzyme catalyses a 1,2-diacyl-sn-glycero-3-phospho-(1D-myo-inositol 4-phosphate) + ATP = a 1,2-diacyl-sn-glycero-3-phospho-(1D-myo-inositol-4,5-bisphosphate) + ADP + H(+). May act as a scaffold to localize and regulate type I PI(4)P 5-kinases to specific compartments within the cell, where they generate PI(4,5)P2 for actin nucleation, signaling and scaffold protein recruitment and conversion to PI(3,4,5)P3. In Homo sapiens (Human), this protein is Phosphatidylinositol 4-phosphate 5-kinase-like protein 1 (PIP5KL1).